The following is a 383-amino-acid chain: Insulinoma-associated protein 1a (383 aa).

An SNAG domain region spans residues 1–20; the sequence is MPRGFLVKRNKKATPVSYRV. Disordered regions lie at residues 99 to 141 and 229 to 269; these read PVDL…AMRK and RWHK…SEDG. Residues 105-120 are compositionally biased toward polar residues; sequence GTSNSNRTGTTVTTKR. Over residues 130–140 the composition is skewed to basic residues; it reads KPASKKAKAMR. The segment at 209–231 adopts a C2H2-type 1 zinc-finger fold; that stretch reads YRCPECDKLFSCPANLASHRRWH. Over residues 244-256 the composition is skewed to basic and acidic residues; the sequence is APEKEETSSDRDT. The segment at 271 to 295 adopts a C2H2-type 2; degenerate zinc-finger fold; the sequence is YDCQHCGKKFKRQAYLKKHVTAHHD. 2 C2H2-type zinc fingers span residues 314 to 337 and 342 to 365; these read HLCPVCGENFPSRMSQERHIRLQH and YPCKYCPAMFYSSPGLTRHINKCH.

This sequence belongs to the INSM1 family.

It localises to the nucleus. Functionally, may act as a transcriptional regulator. May play a role in neurogenesis and neuroendocrine cell differentiation during embryonic development. The polypeptide is Insulinoma-associated protein 1a (insm1a) (Danio rerio (Zebrafish)).